The sequence spans 476 residues: Aspartyl/glutamyl-tRNA(Asn/Gln) amidotransferase subunit B (476 aa).

The protein belongs to the GatB/GatE family. GatB subfamily. In terms of assembly, heterotrimer of A, B and C subunits.

The catalysed reaction is L-glutamyl-tRNA(Gln) + L-glutamine + ATP + H2O = L-glutaminyl-tRNA(Gln) + L-glutamate + ADP + phosphate + H(+). It carries out the reaction L-aspartyl-tRNA(Asn) + L-glutamine + ATP + H2O = L-asparaginyl-tRNA(Asn) + L-glutamate + ADP + phosphate + 2 H(+). In terms of biological role, allows the formation of correctly charged Asn-tRNA(Asn) or Gln-tRNA(Gln) through the transamidation of misacylated Asp-tRNA(Asn) or Glu-tRNA(Gln) in organisms which lack either or both of asparaginyl-tRNA or glutaminyl-tRNA synthetases. The reaction takes place in the presence of glutamine and ATP through an activated phospho-Asp-tRNA(Asn) or phospho-Glu-tRNA(Gln). In Bacillus pumilus (strain SAFR-032), this protein is Aspartyl/glutamyl-tRNA(Asn/Gln) amidotransferase subunit B.